Consider the following 604-residue polypeptide: NADPH oxidase activator (604 aa).

TPR repeat units follow at residues 36-69 (SKINYNIGVMYIKSNNFRNAIEYFNRSVEQDKYL) and 71-103 (SSYYMRAIAHHMNGELNHAIVDYDETISKLRGH). 2 disordered regions span residues 180–298 (FKPP…KLPS) and 383–581 (DIIP…PYQV). Low complexity-rich tracts occupy residues 194–215 (SATTSSIQSSSPSTPMSSSPPS) and 225–243 (PSSSSPSSSSPSLSSSSSP). Residues 244–260 (KLPPTPKPSFGSSPPPS) are compositionally biased toward pro residues. Residues 261-284 (SSSSSSSSSSSSSSSISPLTNKTL) are compositionally biased toward low complexity. One can recognise a PB1 domain in the interval 309-384 (KITLKVFYKD…EINEINVKDI (76 aa)). 3 stretches are compositionally biased toward low complexity: residues 396 to 424 (PDKTNNSTSSYSSSSSSSSSSSSSSSSSS), 435 to 453 (PKTTTRPILPPTTTTTTST), and 467 to 483 (FGSTPSSPSFSSPSSSS). A compositionally biased stretch (polar residues) spans 502–528 (LLKQQNQTQSINIPPKVPTSSRPKMTQ). Positions 529-570 (SHSPPSSSPLSSYSTSFQSVSSPSLSSSYNGSTSSYGGFSSS) are enriched in low complexity. The region spanning 573–604 (PPTPYPYQVLYTDSNEKYYLNTETNETFWELP) is the WW domain.

Its function is as follows. May function as an activator of NOX1, a superoxide-producing NADPH oxidase. This chain is NADPH oxidase activator (ncfA), found in Dictyostelium discoideum (Social amoeba).